Here is a 57-residue protein sequence, read N- to C-terminus: Metallothionein-2 (57 aa).

The interval 1-28 (PDPCCNDKCDCKEGECKTGCKCTSCRCP) is beta. Residues Cys4, Cys5, Cys9, Cys11, Cys16, Cys20, Cys22, Cys25, Cys27, Cys30, Cys33, Cys37, Cys39, Cys45, Cys49, Cys53, Cys55, and Cys56 each coordinate a divalent metal cation. Positions 29-57 (PCEQCSSGCKCANKEDCRKTCSKPCSCCP) are alpha.

The protein belongs to the metallothionein superfamily. Type 3 family.

Its function is as follows. Metallothioneins have a high content of cysteine residues that bind various heavy metals. Class I MTS in marine crustacea are involved in the sequestration of elevated levels of heavy-metal ions. This Scylla serrata (Mud crab) protein is Metallothionein-2.